Consider the following 90-residue polypeptide: MARSIWKGPFVDLHLLRKAEGAQDSGARAPIKTWSRRSTILPQFVGLTFNVYNGRKFVPVSVSEEMVGHKLGEFAPTRYFPGHADKKGKR.

This sequence belongs to the universal ribosomal protein uS19 family.

Its function is as follows. Protein S19 forms a complex with S13 that binds strongly to the 16S ribosomal RNA. This chain is Small ribosomal subunit protein uS19, found in Rhizorhabdus wittichii (strain DSM 6014 / CCUG 31198 / JCM 15750 / NBRC 105917 / EY 4224 / RW1) (Sphingomonas wittichii).